We begin with the raw amino-acid sequence, 57 residues long: Large ribosomal subunit protein bL32c (57 aa).

The segment at M1–K21 is disordered.

Belongs to the bacterial ribosomal protein bL32 family.

It localises to the plastid. The protein resides in the chloroplast. The chain is Large ribosomal subunit protein bL32c from Stigeoclonium helveticum (Green alga).